The chain runs to 55 residues: Large ribosomal subunit protein bL33 (55 aa).

This sequence belongs to the bacterial ribosomal protein bL33 family. As to quaternary structure, part of the 50S ribosomal subunit. Contacts protein L35.

In terms of biological role, binds the 23S rRNA and the E site tRNA. This chain is Large ribosomal subunit protein bL33 (rpmG), found in Deinococcus radiodurans (strain ATCC 13939 / DSM 20539 / JCM 16871 / CCUG 27074 / LMG 4051 / NBRC 15346 / NCIMB 9279 / VKM B-1422 / R1).